We begin with the raw amino-acid sequence, 1116 residues long: Anillin (1116 aa).

Basic and acidic residues-rich tracts occupy residues 1–25 (MDPF…KMAD) and 85–94 (KQPKTPELPK). 4 disordered regions span residues 1 to 188 (MDPF…PVGR), 205 to 257 (DLSH…PKDT), 304 to 363 (KPNE…KVAT), and 443 to 522 (NVWT…PRLV). Residues 101-119 (ASHQQLRATNQTPQVSLLS) are compositionally biased toward polar residues. Residues 120–133 (SDKELTASDVKDAS) are compositionally biased toward basic and acidic residues. An interactions with myh9 and myh10 region spans residues 142–254 (LADQRRYWDN…QDTTSCSQRP (113 aa)). Over residues 226 to 242 (SKESTTSSASASMNSHS) the composition is skewed to low complexity. Residues 255-418 (KDTTVNKAVC…LKQNDISSTA (164 aa)) are interaction with F-actin. 2 stretches are compositionally biased toward polar residues: residues 304-326 (KPNE…SSPQ) and 336-356 (YSYQ…VQTQ). Residues 416–443 (STASLAQQQKKEREKELAALRGRYDRRN) are a coiled coil. Positions 453 to 472 (QGTFPETSSNLPTSDVASCS) are enriched in polar residues. The PH domain occupies 975 to 1099 (SVEDKGFLTM…WMQKLNQFLV (125 aa)).

As to quaternary structure, interacts with and bundles F-actin. Interacts with the non-muscle myosin II heavy chains myh9 and myh10, and these interactions may be enhanced by the phosphorylation of myosin II regulatory light chain by mylk.

It localises to the nucleus. The protein resides in the cytoplasm. The protein localises to the cytoskeleton. Its subcellular location is the cell cortex. It is found in the cell projection. It localises to the bleb. Its function is as follows. Required for cytokinesis. Essential for the structural integrity of the cleavage furrow and for completion of cleavage furrow ingression. Plays a role in bleb assembly during metaphase and anaphase of mitosis. May play a significant role in podocyte cell migration. The protein is Anillin (anln) of Xenopus laevis (African clawed frog).